The following is a 681-amino-acid chain: MISENTIEERLQALRAAIALHDFHYYVQDAPVIPDAEYDALFRTLQQLEQQYPHLVTPDSPTQRVGAPPLKVFAQLTHQTPMLSLANAFSEEEVTAFDRRIREALNIDRVDYAVEPKFDGLAISLIYANGILTKGATRGDGYTGEDITLNLRTIPSIPLRLQVPFPTGQFEVRGEVVMLKTDFERLNEQQRKNGEKTFVNPRNAAAGSLRQLDSRITAMRRLTFFAYGIGAYHEDQPIFSTHSEILAYLATQQFLVARQSSTVMGANGLLAYYREMNAVRLSLPYEIDGVVYKVNDLAQQEKLGYVSRAPRFAIAHKFPAQEVSTELLAIEIQVGRTGALTPVARLAPVFVGGVTVTNATLHNEDEVQRKQIMIGDTVIVRRAGDVIPEVVAVIVERRPTHAQAFVMPDHCPVCGSKAVRLPDEAVTRCTGGLYCPAQRKQAILHFASRRAIDIDGLGEKLVDQLIDRELVHTPADLYRLDIDTLAGLERMAGKSARNLVTAIEDSKKTTLPRFIYALGIRHVGEATAKALASHTGDLDRLMDMNAEQLQQIPDIGPIVAQSIADFFSEAHNREVIEQLLSCGLQWEKPSHIAQPSSRTNLAVPGKTFVLTGTLPTMTRDQAKNRIEQQGGKVTGSVSSATSYVVAGSDPGSKYARAIELGIPVLDEDQLLSLLRDTSSSE.

NAD(+) is bound by residues 35-39 (DAEYD), 84-85 (SL), and E115. The active-site N6-AMP-lysine intermediate is K117. NAD(+)-binding residues include R138, E175, K293, and K317. Zn(2+) is bound by residues C411, C414, C429, and C435. The BRCT domain maps to 598–681 (RTNLAVPGKT…SLLRDTSSSE (84 aa)).

This sequence belongs to the NAD-dependent DNA ligase family. LigA subfamily. Requires Mg(2+) as cofactor. Mn(2+) serves as cofactor.

The enzyme catalyses NAD(+) + (deoxyribonucleotide)n-3'-hydroxyl + 5'-phospho-(deoxyribonucleotide)m = (deoxyribonucleotide)n+m + AMP + beta-nicotinamide D-nucleotide.. Its function is as follows. DNA ligase that catalyzes the formation of phosphodiester linkages between 5'-phosphoryl and 3'-hydroxyl groups in double-stranded DNA using NAD as a coenzyme and as the energy source for the reaction. It is essential for DNA replication and repair of damaged DNA. This is DNA ligase from Nitrosomonas europaea (strain ATCC 19718 / CIP 103999 / KCTC 2705 / NBRC 14298).